We begin with the raw amino-acid sequence, 765 residues long: Protein PAT1 homolog 1 (765 aa).

Disordered regions lie at residues 1 to 98 (MFRF…DERG), 119 to 147 (GVGS…LAGP), and 210 to 244 (LPNR…SPPV). Residues 7–30 (LDDDCTLEEEEGLVEEEDEIDQFN) are compositionally biased toward acidic residues. The segment covering 45-59 (EEHTRLAELDERVRD) has biased composition (basic and acidic residues). The segment covering 218 to 227 (SRDEGRDLSE) has biased composition (basic and acidic residues). Serine 235 and serine 236 each carry phosphoserine. Positions 235 to 244 (SSPVIGSPPV) are enriched in low complexity.

This sequence belongs to the PAT1 family. In terms of assembly, interacts with ribonucleoprotein complex components.

The protein localises to the cytoplasm. It is found in the P-body. Its subcellular location is the nucleus. The protein resides in the PML body. It localises to the nucleus speckle. Its function is as follows. RNA-binding protein involved in deadenylation-dependent decapping of mRNAs, leading to the degradation of mRNAs. Acts as a scaffold protein that connects deadenylation and decapping machinery. Required for cytoplasmic mRNA processing body (P-body) assembly. The sequence is that of Protein PAT1 homolog 1 (patl1) from Danio rerio (Zebrafish).